A 570-amino-acid polypeptide reads, in one-letter code: PTS system lactose-specific EIICB component (570 aa).

Residues 9-410 (IEKGKPFFEK…VVDIIIYYPF (402 aa)) enclose the PTS EIIC type-3 domain. 9 helical membrane-spanning segments follow: residues 31–51 (GFISAMPVILFSSIFLLIAYV), 65–85 (AILMKPYNYTMGLVAFLVAGT), 104–124 (INFISTMLAAMCGFLFLASDP), 133–153 (AFMGTKGLLTAFLSAFVTVIV), 178–198 (FKDLIPFSAVIIILYALDLVI), 223–243 (GWIGVTIIFGAFALFWFVGIH), 283–303 (MFIVTFGGTGATLVVPFMFMW), 340–360 (VFFIPFVLAPIVNVWIFKLFV), and 382–402 (IIMGTGFGLWSFVLAITLIVV). A PTS EIIB type-3 domain is found at 467–570 (QTNVLVLCAG…LDFVQQQFEN (104 aa)). Catalysis depends on Cys474, which acts as the Phosphocysteine intermediate; for EIIB activity. The residue at position 474 (Cys474) is a Phosphocysteine; by EIIA.

The protein localises to the cell membrane. The enzyme catalyses lactose(out) + N(pros)-phospho-L-histidyl-[protein] = lactose 6-phosphate(in) + L-histidyl-[protein]. In terms of biological role, the phosphoenolpyruvate-dependent sugar phosphotransferase system (sugar PTS), a major carbohydrate active transport system, catalyzes the phosphorylation of incoming sugar substrates concomitantly with their translocation across the cell membrane. The enzyme II LacEF PTS system is involved in lactose transport. This chain is PTS system lactose-specific EIICB component, found in Staphylococcus aureus (strain N315).